The sequence spans 402 residues: Glutamate N-acetyltransferase (402 aa).

Thr151, Lys178, Thr189, Glu267, Asn397, and Thr402 together coordinate substrate. Thr189 serves as the catalytic Nucleophile.

The protein belongs to the ArgJ family. As to quaternary structure, heterotetramer of two alpha and two beta chains.

It localises to the cytoplasm. It catalyses the reaction N(2)-acetyl-L-ornithine + L-glutamate = N-acetyl-L-glutamate + L-ornithine. It functions in the pathway amino-acid biosynthesis; L-arginine biosynthesis; L-ornithine and N-acetyl-L-glutamate from L-glutamate and N(2)-acetyl-L-ornithine (cyclic): step 1/1. Catalyzes the transfer of the acetyl group from N(2)-acetylornithine to glutamate, forming N-acetylglutamate and L-ornithine. The sequence is that of Glutamate N-acetyltransferase from Methanothermobacter thermautotrophicus (strain ATCC 29096 / DSM 1053 / JCM 10044 / NBRC 100330 / Delta H) (Methanobacterium thermoautotrophicum).